The sequence spans 145 residues: UPF0201 protein STK_09490 (145 aa).

The protein belongs to the UPF0201 family.

The sequence is that of UPF0201 protein STK_09490 from Sulfurisphaera tokodaii (strain DSM 16993 / JCM 10545 / NBRC 100140 / 7) (Sulfolobus tokodaii).